We begin with the raw amino-acid sequence, 173 residues long: RNA pyrophosphohydrolase (173 aa).

One can recognise a Nudix hydrolase domain in the interval 11 to 164 (PYRRSVGILV…KKHVYMKIVN (154 aa)). The short motif at 52-73 (GGIDENEEPLDAARRELYEETG) is the Nudix box element.

This sequence belongs to the Nudix hydrolase family. RppH subfamily. Requires a divalent metal cation as cofactor.

In terms of biological role, accelerates the degradation of transcripts by removing pyrophosphate from the 5'-end of triphosphorylated RNA, leading to a more labile monophosphorylated state that can stimulate subsequent ribonuclease cleavage. The chain is RNA pyrophosphohydrolase from Bartonella henselae (strain ATCC 49882 / DSM 28221 / CCUG 30454 / Houston 1) (Rochalimaea henselae).